A 413-amino-acid chain; its full sequence is THAP domain-containing protein 5 (413 aa).

The THAP-type zinc-finger motif lies at 1-85 (MPRYCAASYC…LKHTAVPTIF (85 aa)). The segment at 84-118 (IFSSPDDEEKGSSQNSPQEIRREDQEETTKNVESK) is disordered. Residues 102 to 118 (EIRREDQEETTKNVESK) are compositionally biased toward basic and acidic residues. A coiled-coil region spans residues 375-399 (RLRSLEALIGQLKQENLLSEEKLKI).

The protein localises to the nucleus. This chain is THAP domain-containing protein 5 (THAP5), found in Gallus gallus (Chicken).